Reading from the N-terminus, the 485-residue chain is Auxin transporter protein 1 (485 aa).

The Cytoplasmic segment spans residues 1-59 (MSEGVEAIVANDNGTDQVNGNRTGKDNEEHDGSTGSNLSNFLWHGGSVWDAWFSCASNQ). Positions 12–22 (DNGTDQVNGNR) are enriched in polar residues. The tract at residues 12-33 (DNGTDQVNGNRTGKDNEEHDGS) is disordered. Basic and acidic residues predominate over residues 23–32 (TGKDNEEHDG). The chain crosses the membrane as a helical span at residues 60 to 77 (VAQVLLTLPYSFSQLGML). Residues 78-79 (SG) are Extracellular-facing. Residues 80 to 100 (IVLQIFYGLLGSWTAYLISVL) form a helical membrane-spanning segment. Topologically, residues 101–135 (YVEYRARKEKEGKSFKNHVIQWFEVLDGLLGSYWK) are cytoplasmic. The helical transmembrane segment at 136–156 (ALGLAFNCTFLLFGSVIQLIA) threads the bilayer. Residues 157-172 (CASNIYYINDHLDKRT) lie on the Extracellular side of the membrane. Residues 173–193 (WTYIFGACCATTVFIPSFHNY) traverse the membrane as a helical segment. At 194–196 (RIW) the chain is on the cytoplasmic side. A helical membrane pass occupies residues 197-217 (SFLGLGMTTYTAWYLAIASII). The Extracellular portion of the chain corresponds to 218–232 (HGQAEGVKHSGPTKL). Residues 233-253 (VLYFTGATNILYTFGGHAVTV) form a helical membrane-spanning segment. The Cytoplasmic segment spans residues 254-266 (EIMHAMWKPQKFK). Residues 267–287 (YIYLMATLYVFTLTIPSAAAV) form a helical membrane-spanning segment. Topologically, residues 288 to 314 (YWAFGDALLDHSNAFSLMPKNAWRDAA) are extracellular. A helical membrane pass occupies residues 315-335 (VILMLIHQFITFGFACTPLYF). Topologically, residues 336–356 (VWEKVIGMHDTKSICLRALAR) are cytoplasmic. A helical membrane pass occupies residues 357 to 377 (LPVVIPIWFLAIIFPFFGPIN). Position 378 (Ser-378) is a topological domain, extracellular. The helical transmembrane segment at 379 to 399 (AVGALLVSFTVYIIPSLAHML) threads the bilayer. Over 400–425 (TYRSASARQNAAEKPPFFMPSWTAMY) the chain is Cytoplasmic. A helical transmembrane segment spans residues 426 to 446 (VLNAFVVVWVLIVGFGFGGWA). The Extracellular segment spans residues 447–485 (SVTNFVRQVDTFGLFAKCYQCKPAAAAAHAPVSALHHRL).

Belongs to the amino acid/polyamine transporter 2 family. Amino acid/auxin permease (AAAP) (TC 2.A.18.1) subfamily. As to expression, expressed in root and shoot apical tissues. In root apex, confined to stele initials, protophloem poles, statolith-containing S2 columella cells, lateral root cap cells (LRC), and in epidermal cells from the distal elongation zone (DEZ) up to central elongation zone (CEZ).

Its subcellular location is the cell membrane. Auxin uptake mediated by AUX1 is inhibited by chromosaponin-1 (CSI), 1-naphthoxyacetic acid (1-NOA) and 3-chloro-4-hydroxyphenylacetic acid (CHPAA). Carrier protein involved in proton-driven auxin influx. Mediates the formation of auxin gradient from developing leaves (site of auxin biosynthesis) to tips by contributing to the loading of auxin in vascular tissues and facilitating acropetal (base to tip) auxin transport within inner tissues of the root apex, and basipetal (tip to base) auxin transport within outer tissues of the root apex. Unloads auxin from the mature phloem to deliver the hormone to the root meristem via the protophloem cell files. Coordinated subcellular localization of AUX1 is regulated by a brefeldin A-sensitive (BFA) vesicle trafficking process. Involved in lateral root formation, trichoblast polarization and root hair elongation. Required for gravitropism and thigmotropism, especially in roots, by modulating responses to auxin, ethylene and cytokinins such as benzyladenine (BA). Needed for ammonium-mediated root-growth inhibition. Confers sensitivity to the herbicide 2,4-dichlorophenoxyacetic acid (2,4-D, auxin analog), and to polar auxin transport inhibitors such as N-1-naphthylphthalamic acid (NPA) and 2,3,5-triiodobenzoic acid (TIBA). The sequence is that of Auxin transporter protein 1 (AUX1) from Arabidopsis thaliana (Mouse-ear cress).